Here is a 386-residue protein sequence, read N- to C-terminus: Succinate--CoA ligase [ADP-forming] subunit beta (386 aa).

An ATP-grasp domain is found at 9–235 (KELFAKHDVP…REEEDPLESA (227 aa)). ATP is bound by residues lysine 44, 51–53 (GRG), alanine 93, and glutamate 98. Positions 190 and 204 each coordinate Mg(2+). Substrate is bound by residues asparagine 255 and 317 to 319 (GIT).

The protein belongs to the succinate/malate CoA ligase beta subunit family. Heterotetramer of two alpha and two beta subunits. The cofactor is Mg(2+).

It catalyses the reaction succinate + ATP + CoA = succinyl-CoA + ADP + phosphate. It carries out the reaction GTP + succinate + CoA = succinyl-CoA + GDP + phosphate. It participates in carbohydrate metabolism; tricarboxylic acid cycle; succinate from succinyl-CoA (ligase route): step 1/1. In terms of biological role, succinyl-CoA synthetase functions in the citric acid cycle (TCA), coupling the hydrolysis of succinyl-CoA to the synthesis of either ATP or GTP and thus represents the only step of substrate-level phosphorylation in the TCA. The beta subunit provides nucleotide specificity of the enzyme and binds the substrate succinate, while the binding sites for coenzyme A and phosphate are found in the alpha subunit. The protein is Succinate--CoA ligase [ADP-forming] subunit beta of Nocardioides sp. (strain ATCC BAA-499 / JS614).